The chain runs to 425 residues: 3-phosphoshikimate 1-carboxyvinyltransferase (425 aa).

K20, S21, and R25 together coordinate 3-phosphoshikimate. K20 contributes to the phosphoenolpyruvate binding site. Positions 92 and 120 each coordinate phosphoenolpyruvate. 3-phosphoshikimate-binding residues include S165, Q167, D312, and K339. A phosphoenolpyruvate-binding site is contributed by Q167. D312 serves as the catalytic Proton acceptor. Positions 343 and 385 each coordinate phosphoenolpyruvate.

The protein belongs to the EPSP synthase family. Monomer.

It is found in the cytoplasm. The enzyme catalyses 3-phosphoshikimate + phosphoenolpyruvate = 5-O-(1-carboxyvinyl)-3-phosphoshikimate + phosphate. It functions in the pathway metabolic intermediate biosynthesis; chorismate biosynthesis; chorismate from D-erythrose 4-phosphate and phosphoenolpyruvate: step 6/7. Its function is as follows. Catalyzes the transfer of the enolpyruvyl moiety of phosphoenolpyruvate (PEP) to the 5-hydroxyl of shikimate-3-phosphate (S3P) to produce enolpyruvyl shikimate-3-phosphate and inorganic phosphate. The sequence is that of 3-phosphoshikimate 1-carboxyvinyltransferase from Alkaliphilus metalliredigens (strain QYMF).